Here is a 562-residue protein sequence, read N- to C-terminus: Oligo-1,6-glucosidase (562 aa).

Residues aspartate 21, asparagine 23, aspartate 25, and aspartate 29 each coordinate Ca(2+). The active-site Nucleophile is aspartate 199. The active-site Proton donor is the glutamate 256.

It belongs to the glycosyl hydrolase 13 family.

Its subcellular location is the cytoplasm. The enzyme catalyses Hydrolysis of (1-&gt;6)-alpha-D-glucosidic linkages in some oligosaccharides produced from starch and glycogen by alpha-amylase, and in isomaltose.. The polypeptide is Oligo-1,6-glucosidase (malL) (Parageobacillus thermoglucosidasius (Geobacillus thermoglucosidasius)).